The following is a 1269-amino-acid chain: SLDTTGNVDLTSANVKAGSLDLNAGNKLILDTATQTTHQVSRDGATSDKTTLGPAANLNVAGDASIKTGGDFQQNAGNLNVGGNLNANIGGNWNLGVQQTGEHKVVQRANGVSDTDLNSATGSTVNVGGKSAIGVGGDLTAQGARLDFGQGGTVAAKGNVTFGAASTTSTINANSSGDQGNRSYAETRHGADQALTGTTVKGGDTLNVVSGKDINVIGSTIDLKKGDANLLAAGDVNVGAATETHVYNSRETHSRSGVVSGTKIASSQDATSTVANGSLISADGVSIGSGKDINVQGSTVVGTHDVALNAAHDVNITTSQDTSQSSTTYQEQHSGLMSGGGLSFSVGNSKLAQQNQSSSVTNNASTVGSVDGNLTVNAGNTLHVKGSDLVAGKDVTGTATNIVVDSATDTTHQAQQQQTSKSGLTVGLSGSVGDAINNAISETQAARESAKDSNGRASALHSIAAAGDVAFGGLGAKALLDGAKGPQAPSIGVQVSVGSSHSSMQSSEDQTIQRGSSINAGGNAKLIATGNGTPKDGNITIAGSNVNAANVALVANNQVNLVNTTDTDKTQSSNSSSGSSVGVSIGTNGIGVSASMQRAHGDGNSDAAIQNNTHINASQTATIVSGGDTNVIGANVNANKVVADVGGNLNVASVQDTTVSAAHQSSAGGGFTISQTGGGASFSAQNGHADGNYAGVKEQAGIQAGSGGFDVTVKGNTDLKGAYIGSTADASKNSLTTGTLTTSDIENHSHYSANSAGFSAGASVGVSTKAVGPSSVSGSGGVTPMVFQNDSGDQSATTKSAVSAGTINITKPGEQTQDVANLNRDTTNLNGTVSKTPDVQKMLSQQADTMNAAQAAGQTVSQAIGLYADYKRDAALDAADKAYKAGDLAGAQAALNEAKGWMEGGASRAELQMGGGALIGGLGGGSALTAIGGAAGAGTSSLLANQAEKISKSVGDTTGSSLVGNIAANVAATVGGALVGGSAGAAMASNVQLYNAGNDSNNQTSNDVFASLSKKVAQAIAMTADGKAGVWNGMVNVAGVIVNLPNGGPFASPGDPGYVSLDGLKKPYKSGTSIGPDAEFWTPVLATLGLGGKAAAGTGATTTSADAATVGNGALKTASGDLSAAGNAARTQPYGNGASASPSPGTATAGSSGANAQLPTANGGVAAAGTSSATNVGKVVIDGKIGGQLEARGWTQQEVQAVVNEGPVGTTMDNRSAGKTPDGLPRNDSASVYGSKSGYVVVNDRTGEVVQVSGKNDPVWIPDSRIKWK.

Residues 1–251 are FHA-2; it reads SLDTTGNVDL…TETHVYNSRE (251 aa). The segment at 252–991 is pretoxin (PT) domain; that stretch reads THSRSGVVSG…SAGAAMASNV (740 aa). Composition is skewed to low complexity over residues 317-336 and 491-507; these read TTSQ…HSGL and IGVQ…MQSS. Disordered stretches follow at residues 317-340 and 491-518; these read TTSQ…MSGG and IGVQ…GSSI. Polar residues predominate over residues 508–518; the sequence is EDQTIQRGSSI. The CT domain, has tRNA nuclease activity stretch occupies residues 981 to 1269; the sequence is GSAGAAMASN…WIPDSRIKWK (289 aa). The short motif at 992 to 995 is the ELYN CT motif element; sequence QLYN. 2 disordered regions span residues 1124-1155 and 1207-1231; these read AAGN…SGAN and PVGT…DSAS. Residues 1135 to 1155 show a composition bias toward low complexity; that stretch reads GNGASASPSPGTATAGSSGAN.

The protein belongs to the CdiA toxin family. Specifically interacts with cognate immunity protein CdiI, which blocks its tRNA nuclease activity.

The protein resides in the target cell. It is found in the target cell cytoplasm. In terms of biological role, toxic component of a toxin-immunity protein module, which functions as a cellular contact-dependent growth inhibition (CDI) system. CDI modules allow bacteria to communicate with and inhibit the growth of closely related neighboring bacteria in a contact-dependent fashion. The C-terminal 282 residues (CT domain) acts as a tRNA endonuclease on some (tRNA1(Tyr), tRNA(Asn), tRNA(His)), but not all E.coli tRNAs, and inhibits growth in E.coli. Toxic activity is neutralized by coexpression of the cognate immunity protein CdiI in E.coli, but not by non-cognate immunity proteins from other strains of B.pseudomallei. The CdiA protein is thought to be exported from the cell through the central lumen of CdiB, the other half of its two-partner system (TPS). The TPS domain probably remains associated with CdiB while the FHA-1 domain forms an extended filament with the receptor-binding domain (RBD) at its extremity; in the secretion arrested state the C-terminus of the RBD domain form a hairpin-like structure as the FHA-2, PT and CT domains are periplasmic. Upon binding to a target cell outer membrane receptor a signal is transmitted to activate secretion. The filament elongates slightly, the rest of CdiA is secreted and the FHA-2 domain becomes stably associated with the target cell's outer membrane where it facilitates entry of the toxic CT domain into the target cell periplasm. From there the toxic CT domain is cleaved and gains access to the target cell cytoplasm via an inner membrane protein. The protein is tRNA nuclease CdiA (cdiA) of Burkholderia pseudomallei (Pseudomonas pseudomallei).